Consider the following 238-residue polypeptide: Probable transcriptional regulatory protein VS_II1504 (238 aa).

Belongs to the TACO1 family.

The protein localises to the cytoplasm. This chain is Probable transcriptional regulatory protein VS_II1504, found in Vibrio atlanticus (strain LGP32) (Vibrio splendidus (strain Mel32)).